The chain runs to 102 residues: Pole-localizer protein TmaR (102 aa).

The stretch at 7-34 (IINQARRKNKLKRELQDNQKKIRDNQKR) forms a coiled coil.

It belongs to the pole-localizer TmaR family.

The protein resides in the cytoplasm. In terms of biological role, pole-localizer protein involved in the regulation of several cellular processes. The polypeptide is Pole-localizer protein TmaR (Aliivibrio fischeri (strain ATCC 700601 / ES114) (Vibrio fischeri)).